A 604-amino-acid polypeptide reads, in one-letter code: Glutamine--fructose-6-phosphate aminotransferase [isomerizing] (604 aa).

Residue Cys2 is the Nucleophile; for GATase activity of the active site. One can recognise a Glutamine amidotransferase type-2 domain in the interval 2 to 218 (CGIVGVVGNT…DKELVIVKKD (217 aa)). SIS domains follow at residues 284-423 (IIKS…ANGK) and 456-594 (VEQL…VDKP). The active-site For Fru-6P isomerization activity is the Lys599.

As to quaternary structure, homodimer.

The protein localises to the cytoplasm. It catalyses the reaction D-fructose 6-phosphate + L-glutamine = D-glucosamine 6-phosphate + L-glutamate. In terms of biological role, catalyzes the first step in hexosamine metabolism, converting fructose-6P into glucosamine-6P using glutamine as a nitrogen source. The chain is Glutamine--fructose-6-phosphate aminotransferase [isomerizing] from Streptococcus agalactiae serotype V (strain ATCC BAA-611 / 2603 V/R).